The chain runs to 119 residues: Protein TusC (119 aa).

Belongs to the DsrF/TusC family. In terms of assembly, heterohexamer, formed by a dimer of trimers. The hexameric TusBCD complex contains 2 copies each of TusB, TusC and TusD. The TusBCD complex interacts with TusE.

It is found in the cytoplasm. Its function is as follows. Part of a sulfur-relay system required for 2-thiolation of 5-methylaminomethyl-2-thiouridine (mnm(5)s(2)U) at tRNA wobble positions. The protein is Protein TusC of Pectobacterium atrosepticum (strain SCRI 1043 / ATCC BAA-672) (Erwinia carotovora subsp. atroseptica).